The chain runs to 517 residues: Argininosuccinate lyase, chloroplastic (517 aa).

A chloroplast-targeting transit peptide spans methionine 1–arginine 45. Residues serine 79, asparagine 166, and threonine 211 each contribute to the 2-(N(omega)-L-arginino)succinate site. Histidine 212 serves as the catalytic Proton acceptor. Serine 333 functions as the Proton donor in the catalytic mechanism. Positions 341, 373, 378, and 381 each coordinate 2-(N(omega)-L-arginino)succinate.

This sequence belongs to the lyase 1 family. Argininosuccinate lyase subfamily.

Its subcellular location is the plastid. The protein resides in the chloroplast. It catalyses the reaction 2-(N(omega)-L-arginino)succinate = fumarate + L-arginine. The protein operates within amino-acid biosynthesis; L-arginine biosynthesis; L-arginine from L-ornithine and carbamoyl phosphate: step 3/3. The sequence is that of Argininosuccinate lyase, chloroplastic from Arabidopsis thaliana (Mouse-ear cress).